The primary structure comprises 84 residues: Delta-stichotoxin-Shd3a (84 aa).

Residues Met-1 to Ala-19 form the signal peptide. A propeptide spanning residues Met-20–Val-33 is cleaved from the precursor. 3 disulfides stabilise this stretch: Cys-38–Cys-78, Cys-40–Cys-68, and Cys-61–Cys-79. A Lysine amide modification is found at Lys-83.

This sequence belongs to the sea anemone sodium channel inhibitory toxin family. Type II subfamily.

The protein resides in the secreted. It is found in the nematocyst. Functionally, binds specifically to voltage-gated sodium channels (Nav), thereby delaying their inactivation during signal transduction. The polypeptide is Delta-stichotoxin-Shd3a (Stichodactyla haddoni (Saddle carpet anemone)).